Consider the following 237-residue polypeptide: ATP-dependent dethiobiotin synthetase BioD (237 aa).

Position 12–17 (12–17 (DAGKTL)) interacts with ATP. Position 16 (threonine 16) interacts with Mg(2+). The active site involves lysine 37. Residue serine 41 coordinates substrate. ATP-binding positions include aspartate 54, 116–119 (EGAG), and 213–215 (PRL). Positions 54 and 116 each coordinate Mg(2+).

Belongs to the dethiobiotin synthetase family. Homodimer. Requires Mg(2+) as cofactor.

Its subcellular location is the cytoplasm. The enzyme catalyses (7R,8S)-7,8-diammoniononanoate + CO2 + ATP = (4R,5S)-dethiobiotin + ADP + phosphate + 3 H(+). It participates in cofactor biosynthesis; biotin biosynthesis; biotin from 7,8-diaminononanoate: step 1/2. Functionally, catalyzes a mechanistically unusual reaction, the ATP-dependent insertion of CO2 between the N7 and N8 nitrogen atoms of 7,8-diaminopelargonic acid (DAPA, also called 7,8-diammoniononanoate) to form a ureido ring. This Chromohalobacter salexigens (strain ATCC BAA-138 / DSM 3043 / CIP 106854 / NCIMB 13768 / 1H11) protein is ATP-dependent dethiobiotin synthetase BioD.